The chain runs to 556 residues: Glutamine--tRNA ligase (556 aa).

Residues 34-44 carry the 'HIGH' region motif; sequence PEPNGYLHIGH. Residues 35-37 and 41-47 contribute to the ATP site; these read EPN and HIGHAKS. Residues D67 and Y212 each coordinate L-glutamine. Residues T231, 261 to 262, and 269 to 271 contribute to the ATP site; these read RL and MSK. The 'KMSKS' region signature appears at 268-272; sequence VMSKR.

Belongs to the class-I aminoacyl-tRNA synthetase family. As to quaternary structure, monomer.

The protein localises to the cytoplasm. The enzyme catalyses tRNA(Gln) + L-glutamine + ATP = L-glutaminyl-tRNA(Gln) + AMP + diphosphate. The polypeptide is Glutamine--tRNA ligase (Vibrio parahaemolyticus serotype O3:K6 (strain RIMD 2210633)).